Consider the following 57-residue polypeptide: Cecropin-A (57 aa).

Residues 1-21 (IFFFVFACLLALSAVSAAPEP) form the signal peptide.

This sequence belongs to the cecropin family.

It is found in the secreted. Its function is as follows. Cecropins have lytic and antibacterial activity against several Gram-positive and Gram-negative bacteria. In Spodoptera litura (Asian cotton leafworm), this protein is Cecropin-A (CECA).